Here is a 293-residue protein sequence, read N- to C-terminus: tRNA(His) guanylyltransferase (293 aa).

Mg(2+)-binding residues include aspartate 29, glycine 30, and aspartate 76. GTP is bound by residues 29–34 (DGRGFT) and 75–76 (SD). The disordered stretch occupies residues 226–252 (KKVSEEEAEEMSSSAVPEVKSKSQVEK).

Belongs to the tRNA(His) guanylyltransferase family. The cofactor is Mg(2+).

It carries out the reaction a 5'-end ribonucleotide-tRNA(His) + GTP + ATP + H2O = a 5'-end phospho-guanosine-ribonucleotide-tRNA(His) + AMP + 2 diphosphate + H(+). In terms of biological role, adds a GMP to the 5'-end of tRNA(His) after transcription and RNase P cleavage. The chain is tRNA(His) guanylyltransferase (rgt-1) from Neurospora crassa (strain ATCC 24698 / 74-OR23-1A / CBS 708.71 / DSM 1257 / FGSC 987).